Consider the following 228-residue polypeptide: L-ribulose-5-phosphate 4-epimerase UlaF (228 aa).

Residues 26–27 (GN), 43–44 (SG), and 72–73 (SS) each bind substrate. Aspartate 74, histidine 93, and histidine 95 together coordinate Zn(2+). The active-site Proton donor/acceptor is the aspartate 118. Residue histidine 167 participates in Zn(2+) binding. Residue tyrosine 225 is the Proton donor/acceptor of the active site.

This sequence belongs to the aldolase class II family. AraD/FucA subfamily. Zn(2+) is required as a cofactor.

It catalyses the reaction L-ribulose 5-phosphate = D-xylulose 5-phosphate. The protein operates within cofactor degradation; L-ascorbate degradation; D-xylulose 5-phosphate from L-ascorbate: step 4/4. In terms of biological role, catalyzes the isomerization of L-ribulose 5-phosphate to D-xylulose 5-phosphate. Is involved in the anaerobic L-ascorbate utilization. The sequence is that of L-ribulose-5-phosphate 4-epimerase UlaF from Salmonella paratyphi B (strain ATCC BAA-1250 / SPB7).